The primary structure comprises 376 residues: Succinyl-diaminopimelate desuccinylase (376 aa).

A Zn(2+)-binding site is contributed by H67. The active site involves D69. D100 is a binding site for Zn(2+). E134 functions as the Proton acceptor in the catalytic mechanism. Zn(2+) is bound by residues E135, E163, and H349.

Belongs to the peptidase M20A family. DapE subfamily. In terms of assembly, homodimer. The cofactor is Zn(2+). Requires Co(2+) as cofactor.

The enzyme catalyses N-succinyl-(2S,6S)-2,6-diaminopimelate + H2O = (2S,6S)-2,6-diaminopimelate + succinate. The protein operates within amino-acid biosynthesis; L-lysine biosynthesis via DAP pathway; LL-2,6-diaminopimelate from (S)-tetrahydrodipicolinate (succinylase route): step 3/3. Catalyzes the hydrolysis of N-succinyl-L,L-diaminopimelic acid (SDAP), forming succinate and LL-2,6-diaminopimelate (DAP), an intermediate involved in the bacterial biosynthesis of lysine and meso-diaminopimelic acid, an essential component of bacterial cell walls. This is Succinyl-diaminopimelate desuccinylase from Shewanella sediminis (strain HAW-EB3).